The primary structure comprises 177 residues: Large ribosomal subunit protein uL10 (177 aa).

This sequence belongs to the universal ribosomal protein uL10 family. Part of the ribosomal stalk of the 50S ribosomal subunit. The N-terminus interacts with L11 and the large rRNA to form the base of the stalk. The C-terminus forms an elongated spine to which L12 dimers bind in a sequential fashion forming a multimeric L10(L12)X complex.

Functionally, forms part of the ribosomal stalk, playing a central role in the interaction of the ribosome with GTP-bound translation factors. This chain is Large ribosomal subunit protein uL10, found in Variovorax paradoxus (strain S110).